Consider the following 163-residue polypeptide: Large ribosomal subunit protein bL17 (163 aa).

The disordered stretch occupies residues 127-163 (VAKKATRTRRSKKSAEAAAPAAVEAPATEEPKAESAE). The segment covering 129 to 138 (KKATRTRRSK) has biased composition (basic residues). A compositionally biased stretch (low complexity) spans 142-154 (EAAAPAAVEAPAT).

Belongs to the bacterial ribosomal protein bL17 family. Part of the 50S ribosomal subunit. Contacts protein L32.

This is Large ribosomal subunit protein bL17 from Bacteroides thetaiotaomicron (strain ATCC 29148 / DSM 2079 / JCM 5827 / CCUG 10774 / NCTC 10582 / VPI-5482 / E50).